The following is a 454-amino-acid chain: Adenosylmethionine-8-amino-7-oxononanoate aminotransferase (454 aa).

119–120 contributes to the pyridoxal 5'-phosphate binding site; it reads GA. Tyr152 is a substrate binding site. Asp257 contacts pyridoxal 5'-phosphate. Residues Lys286, Gly321, and Arg416 each contribute to the substrate site. At Lys286 the chain carries N6-(pyridoxal phosphate)lysine.

It belongs to the class-III pyridoxal-phosphate-dependent aminotransferase family. BioA subfamily. As to quaternary structure, homodimer. The cofactor is pyridoxal 5'-phosphate.

Its subcellular location is the cytoplasm. The enzyme catalyses (8S)-8-amino-7-oxononanoate + S-adenosyl-L-methionine = S-adenosyl-4-methylsulfanyl-2-oxobutanoate + (7R,8S)-7,8-diammoniononanoate. It participates in cofactor biosynthesis; biotin biosynthesis; 7,8-diaminononanoate from 8-amino-7-oxononanoate (SAM route): step 1/1. In terms of biological role, catalyzes the transfer of the alpha-amino group from S-adenosyl-L-methionine (SAM) to 7-keto-8-aminopelargonic acid (KAPA) to form 7,8-diaminopelargonic acid (DAPA). It is the only aminotransferase known to utilize SAM as an amino donor. The protein is Adenosylmethionine-8-amino-7-oxononanoate aminotransferase of Anoxybacillus flavithermus (strain DSM 21510 / WK1).